The sequence spans 131 residues: Protein FAM107B (131 aa).

Ala-2 carries the N-acetylalanine modification. Positions 39–79 (MNQKRGLAPQNKPELQKVMEKRRRDQVIKQKEEEAQKKKSD) are disordered. The residue at position 50 (Lys-50) is an N6-acetyllysine. Over residues 52–79 (ELQKVMEKRRRDQVIKQKEEEAQKKKSD) the composition is skewed to basic and acidic residues. Residues 61–112 (RRDQVIKQKEEEAQKKKSDLEIELLKRQQKLEQLELEKQKLQEEQENAPEFV) adopt a coiled-coil conformation.

The protein belongs to the FAM107 family. Expressed in the hippocampus and hypothalamus. Expressed in the pontine nuclei and reticulotegmental nucleus. Expressed in Purkinje cell and nuclear layers of the cerebelum. Expressed in the choroid plexus. Expressed in hippocampal granule neurons of the dente gyrus.

The sequence is that of Protein FAM107B from Mus musculus (Mouse).